Consider the following 457-residue polypeptide: tRNA-2-methylthio-N(6)-dimethylallyladenosine synthase (457 aa).

Positions 3–120 constitute an MTTase N-terminal domain; that stretch reads KKVYVKTFGC…LPQMIDARRE (118 aa). Positions 12, 49, 83, 157, 161, and 164 each coordinate [4Fe-4S] cluster. The region spanning 143 to 377 is the Radical SAM core domain; that stretch reads RVEGPSAFVS…QATIEENVAR (235 aa). The 68-residue stretch at 380–447 folds into the TRAM domain; that stretch reads QSMLGKVERI…PHSLRGELVL (68 aa).

It belongs to the methylthiotransferase family. MiaB subfamily. As to quaternary structure, monomer. [4Fe-4S] cluster is required as a cofactor.

It is found in the cytoplasm. The catalysed reaction is N(6)-dimethylallyladenosine(37) in tRNA + (sulfur carrier)-SH + AH2 + 2 S-adenosyl-L-methionine = 2-methylsulfanyl-N(6)-dimethylallyladenosine(37) in tRNA + (sulfur carrier)-H + 5'-deoxyadenosine + L-methionine + A + S-adenosyl-L-homocysteine + 2 H(+). Its function is as follows. Catalyzes the methylthiolation of N6-(dimethylallyl)adenosine (i(6)A), leading to the formation of 2-methylthio-N6-(dimethylallyl)adenosine (ms(2)i(6)A) at position 37 in tRNAs that read codons beginning with uridine. The sequence is that of tRNA-2-methylthio-N(6)-dimethylallyladenosine synthase from Burkholderia pseudomallei (strain 1710b).